Consider the following 86-residue polypeptide: MVKIRLTRGGAKKRPFYQIIVTDSRNKRDGRNIERVGHYNPVAQGAESRVVLNVARVEHWVRNGAQLTDKVRSLLKEVSKTQATAS.

Belongs to the bacterial ribosomal protein bS16 family.

The protein is Small ribosomal subunit protein bS16 of Xylella fastidiosa (strain M12).